The primary structure comprises 67 residues: ATP synthase F(0) complex subunit 8 (67 aa).

A helical transmembrane segment spans residues 8–24 (TWFITIVSMLLSLFILM). K54 carries the N6-acetyllysine; alternate modification. The residue at position 54 (K54) is an N6-succinyllysine; alternate. An N6-acetyllysine modification is found at K57.

This sequence belongs to the ATPase protein 8 family. As to quaternary structure, component of the ATP synthase complex composed at least of ATP5F1A/subunit alpha, ATP5F1B/subunit beta, ATP5MC1/subunit c (homooctomer), MT-ATP6/subunit a, MT-ATP8/subunit 8, ATP5ME/subunit e, ATP5MF/subunit f, ATP5MG/subunit g, ATP5MK/subunit k, ATP5MJ/subunit j, ATP5F1C/subunit gamma, ATP5F1D/subunit delta, ATP5F1E/subunit epsilon, ATP5PF/subunit F6, ATP5PB/subunit b, ATP5PD/subunit d, ATP5PO/subunit OSCP. ATP synthase complex consists of a soluble F(1) head domain (subunits alpha(3) and beta(3)) - the catalytic core - and a membrane F(0) domain - the membrane proton channel (subunits c, a, 8, e, f, g, k and j). These two domains are linked by a central stalk (subunits gamma, delta, and epsilon) rotating inside the F1 region and a stationary peripheral stalk (subunits F6, b, d, and OSCP). Interacts with PRICKLE3.

The protein localises to the mitochondrion membrane. In terms of biological role, subunit 8, of the mitochondrial membrane ATP synthase complex (F(1)F(0) ATP synthase or Complex V) that produces ATP from ADP in the presence of a proton gradient across the membrane which is generated by electron transport complexes of the respiratory chain. ATP synthase complex consist of a soluble F(1) head domain - the catalytic core - and a membrane F(1) domain - the membrane proton channel. These two domains are linked by a central stalk rotating inside the F(1) region and a stationary peripheral stalk. During catalysis, ATP synthesis in the catalytic domain of F(1) is coupled via a rotary mechanism of the central stalk subunits to proton translocation. In vivo, can only synthesize ATP although its ATP hydrolase activity can be activated artificially in vitro. Part of the complex F(0) domain. The chain is ATP synthase F(0) complex subunit 8 from Dasypus novemcinctus (Nine-banded armadillo).